Here is a 61-residue protein sequence, read N- to C-terminus: MATKAWVAKMAKPQKFAVRYHNRCQVCGRPRGYYRDFGLCRICLRKMAHQGLIPGVRKSSW.

Positions 24, 27, 40, and 43 each coordinate Zn(2+).

Belongs to the universal ribosomal protein uS14 family. Zinc-binding uS14 subfamily. In terms of assembly, part of the 30S ribosomal subunit. Contacts proteins S3 and S10. The cofactor is Zn(2+).

Its function is as follows. Binds 16S rRNA, required for the assembly of 30S particles and may also be responsible for determining the conformation of the 16S rRNA at the A site. The polypeptide is Small ribosomal subunit protein uS14 (Elusimicrobium minutum (strain Pei191)).